We begin with the raw amino-acid sequence, 236 residues long: Purine nucleoside phosphorylase DeoD-type (236 aa).

Position 5 (H5) interacts with a purine D-ribonucleoside. Residues G21, R25, R44, and 88–91 each bind phosphate; that span reads RVGT. A purine D-ribonucleoside-binding positions include 180–182 and 204–205; these read EME and SD. The Proton donor role is filled by D205.

This sequence belongs to the PNP/UDP phosphorylase family. In terms of assembly, homohexamer; trimer of homodimers.

It carries out the reaction a purine D-ribonucleoside + phosphate = a purine nucleobase + alpha-D-ribose 1-phosphate. The catalysed reaction is a purine 2'-deoxy-D-ribonucleoside + phosphate = a purine nucleobase + 2-deoxy-alpha-D-ribose 1-phosphate. In terms of biological role, catalyzes the reversible phosphorolytic breakdown of the N-glycosidic bond in the beta-(deoxy)ribonucleoside molecules, with the formation of the corresponding free purine bases and pentose-1-phosphate. The sequence is that of Purine nucleoside phosphorylase DeoD-type from Shewanella sp. (strain MR-4).